The sequence spans 439 residues: Dihydroorotase (439 aa).

Positions 65 and 67 each coordinate Zn(2+). Substrate contacts are provided by residues 67–69 (HFR) and asparagine 99. Zn(2+) contacts are provided by aspartate 156, histidine 183, histidine 246, and aspartate 321. Aspartate 321 is an active-site residue. Residues histidine 325 and 339-340 (FG) contribute to the substrate site.

This sequence belongs to the metallo-dependent hydrolases superfamily. DHOase family. Class I DHOase subfamily. Requires Zn(2+) as cofactor.

The enzyme catalyses (S)-dihydroorotate + H2O = N-carbamoyl-L-aspartate + H(+). The protein operates within pyrimidine metabolism; UMP biosynthesis via de novo pathway; (S)-dihydroorotate from bicarbonate: step 3/3. Catalyzes the reversible cyclization of carbamoyl aspartate to dihydroorotate. This chain is Dihydroorotase, found in Chlorobaculum tepidum (strain ATCC 49652 / DSM 12025 / NBRC 103806 / TLS) (Chlorobium tepidum).